The sequence spans 303 residues: UDP-3-O-acyl-N-acetylglucosamine deacetylase (303 aa).

Positions 78, 237, and 241 each coordinate Zn(2+). Histidine 264 serves as the catalytic Proton donor.

The protein belongs to the LpxC family. Zn(2+) serves as cofactor.

The catalysed reaction is a UDP-3-O-[(3R)-3-hydroxyacyl]-N-acetyl-alpha-D-glucosamine + H2O = a UDP-3-O-[(3R)-3-hydroxyacyl]-alpha-D-glucosamine + acetate. It participates in glycolipid biosynthesis; lipid IV(A) biosynthesis; lipid IV(A) from (3R)-3-hydroxytetradecanoyl-[acyl-carrier-protein] and UDP-N-acetyl-alpha-D-glucosamine: step 2/6. In terms of biological role, catalyzes the hydrolysis of UDP-3-O-myristoyl-N-acetylglucosamine to form UDP-3-O-myristoylglucosamine and acetate, the committed step in lipid A biosynthesis. This is UDP-3-O-acyl-N-acetylglucosamine deacetylase from Xanthomonas axonopodis pv. citri (strain 306).